The following is a 199-amino-acid chain: Glycerol-3-phosphate acyltransferase (199 aa).

5 helical membrane passes run Ala-3–Val-23, Trp-50–Val-70, Asp-78–Leu-98, Leu-113–Leu-133, and Leu-154–Phe-174.

It belongs to the PlsY family. In terms of assembly, probably interacts with PlsX.

It localises to the cell inner membrane. The enzyme catalyses an acyl phosphate + sn-glycerol 3-phosphate = a 1-acyl-sn-glycero-3-phosphate + phosphate. The protein operates within lipid metabolism; phospholipid metabolism. Functionally, catalyzes the transfer of an acyl group from acyl-phosphate (acyl-PO(4)) to glycerol-3-phosphate (G3P) to form lysophosphatidic acid (LPA). This enzyme utilizes acyl-phosphate as fatty acyl donor, but not acyl-CoA or acyl-ACP. This chain is Glycerol-3-phosphate acyltransferase, found in Thermus thermophilus (strain ATCC BAA-163 / DSM 7039 / HB27).